Reading from the N-terminus, the 52-residue chain is uncharacterized protein (52 aa).

The segment at 24–52 (LRENPSKNVRTIPDAGDENSSFGHARVIA) is disordered.

This is an uncharacterized protein from Treponema pallidum (strain Nichols).